The sequence spans 215 residues: TLD domain-containing protein 2 (215 aa).

Positions 1–46 (MRGLRWRYTRLPSQVEDTLSGEEGNEEEEEEEAAPDPAAAPEDPTV) are disordered. A compositionally biased stretch (acidic residues) spans 19–34 (LSGEEGNEEEEEEEAA). In terms of domain architecture, TLDc spans 54–215 (QVLSASEIRQ…IQELEAWLLS (162 aa)).

The protein belongs to the OXR1 family.

The sequence is that of TLD domain-containing protein 2 (TLDC2) from Homo sapiens (Human).